A 287-amino-acid chain; its full sequence is MATKPQDANTTSREAITSKADSPPRPTALIFDSGVGGLSVYQEIRQLLPNLHYIYAFDNVAFPYGEKSGEFIVERVLEIVTAVQQSHPLAIVVIACNTASTVSLPALRERFAFPVVGVVPAIKPAVRLTRNGVVGLLATRATVHASYTLDLIARFATDCKIELLGSSELVEAAETKLHGGVVPLEVLKKILHPWLSMREPPDTIVLGCTHFPLLTEELAQVLPEGTRMVDSGAAIARRTAWLISSQENVISSQDENIAYCMALDEDTDALLPVLQSYGFPKLQKLPI.

The span at 1–15 (MATKPQDANTTSREA) shows a compositional bias: polar residues. The segment at 1–25 (MATKPQDANTTSREAITSKADSPPR) is disordered. Residues 32–33 (DS) and 64–65 (YG) each bind substrate. Cys-96 (proton donor/acceptor) is an active-site residue. 97–98 (NT) is a substrate binding site. Residue Cys-208 is the Proton donor/acceptor of the active site. Residue 209–210 (TH) coordinates substrate.

The protein belongs to the aspartate/glutamate racemases family.

It carries out the reaction L-glutamate = D-glutamate. It participates in cell wall biogenesis; peptidoglycan biosynthesis. Its function is as follows. Provides the (R)-glutamate required for cell wall biosynthesis. This Yersinia pseudotuberculosis serotype IB (strain PB1/+) protein is Glutamate racemase.